Consider the following 58-residue polypeptide: UPF0434 protein Swoo_1821 (58 aa).

It belongs to the UPF0434 family.

The protein is UPF0434 protein Swoo_1821 of Shewanella woodyi (strain ATCC 51908 / MS32).